Consider the following 318-residue polypeptide: 2-desacetyl-2-hydroxyethyl bacteriochlorophyllide A dehydrogenase (318 aa).

It participates in porphyrin-containing compound metabolism; bacteriochlorophyll biosynthesis (light-independent). In terms of biological role, this protein catalyzes the penultimate step in bacteriochlorophyll a biosynthesis. The protein is 2-desacetyl-2-hydroxyethyl bacteriochlorophyllide A dehydrogenase (bchC) of Cereibacter sphaeroides (strain ATCC 17023 / DSM 158 / JCM 6121 / CCUG 31486 / LMG 2827 / NBRC 12203 / NCIMB 8253 / ATH 2.4.1.) (Rhodobacter sphaeroides).